We begin with the raw amino-acid sequence, 671 residues long: DNA ligase (671 aa).

NAD(+) is bound by residues 32–36 (DAEYD), 81–82 (SL), and E113. K115 acts as the N6-AMP-lysine intermediate in catalysis. Residues R136, E173, K290, and K314 each contribute to the NAD(+) site. Zn(2+) contacts are provided by C408, C411, C426, and C432. In terms of domain architecture, BRCT spans 593–671 (EIDSPFAGKT…EAEMIRLLDA (79 aa)).

Belongs to the NAD-dependent DNA ligase family. LigA subfamily. It depends on Mg(2+) as a cofactor. Requires Mn(2+) as cofactor.

It catalyses the reaction NAD(+) + (deoxyribonucleotide)n-3'-hydroxyl + 5'-phospho-(deoxyribonucleotide)m = (deoxyribonucleotide)n+m + AMP + beta-nicotinamide D-nucleotide.. Functionally, DNA ligase that catalyzes the formation of phosphodiester linkages between 5'-phosphoryl and 3'-hydroxyl groups in double-stranded DNA using NAD as a coenzyme and as the energy source for the reaction. It is essential for DNA replication and repair of damaged DNA. This chain is DNA ligase, found in Salmonella schwarzengrund (strain CVM19633).